The primary structure comprises 428 residues: Serine--tRNA ligase (428 aa).

L-serine is bound at residue 231–233; the sequence is TAE. An ATP-binding site is contributed by 262–264; sequence RSE. Glutamate 285 is an L-serine binding site. 349–352 provides a ligand contact to ATP; that stretch reads EISS. Serine 385 is an L-serine binding site.

The protein belongs to the class-II aminoacyl-tRNA synthetase family. Type-1 seryl-tRNA synthetase subfamily. Homodimer. The tRNA molecule binds across the dimer.

It is found in the cytoplasm. It carries out the reaction tRNA(Ser) + L-serine + ATP = L-seryl-tRNA(Ser) + AMP + diphosphate + H(+). The enzyme catalyses tRNA(Sec) + L-serine + ATP = L-seryl-tRNA(Sec) + AMP + diphosphate + H(+). The protein operates within aminoacyl-tRNA biosynthesis; selenocysteinyl-tRNA(Sec) biosynthesis; L-seryl-tRNA(Sec) from L-serine and tRNA(Sec): step 1/1. Its function is as follows. Catalyzes the attachment of serine to tRNA(Ser). Is also able to aminoacylate tRNA(Sec) with serine, to form the misacylated tRNA L-seryl-tRNA(Sec), which will be further converted into selenocysteinyl-tRNA(Sec). This Staphylococcus carnosus (strain TM300) protein is Serine--tRNA ligase.